The chain runs to 665 residues: Protein phosphatase 1 regulatory subunit 21 (665 aa).

4 coiled-coil regions span residues 1-84, 125-206, 426-477, and 586-627; these read MTDL…SESK, LEAQ…RKYQ, ESRE…EAQV, and KRLA…EDQL.

In terms of assembly, component of the FERRY complex.

It is found in the early endosome. Component of the FERRY complex (Five-subunit Endosomal Rab5 and RNA/ribosome intermediary). The FERRY complex directly interacts with mRNAs and RAB5A, and functions as a RAB5A effector involved in the localization and the distribution of specific mRNAs most likely by mediating their endosomal transport. The complex recruits mRNAs and ribosomes to early endosomes through direct mRNA-interaction. Putative regulator of protein phosphatase 1 (PP1) activity. May play a role in the endosomal sorting process or in endosome maturation pathway. The polypeptide is Protein phosphatase 1 regulatory subunit 21 (ppp1r21) (Danio rerio (Zebrafish)).